The sequence spans 688 residues: Nucleolar protein 10 (688 aa).

At Met-1 the chain carries N-acetylmethionine. Ser-25 bears the Phosphoserine mark. WD repeat units follow at residues 44-82, 88-124, 127-163, 170-205, 219-258, 262-300, and 304-341; these read ELIQ…CYDT, KFER…FHSQ, FYYK…RLNL, NPLQ…CWDP, NSVT…LYDL, KPLL…MWNK, and KIFT…IYYI. Residues 423-446 are a coiled coil; sequence EYRKDKIRQKIEETRAQRVQLKKL. At Ser-475 the chain carries Phosphoserine. Thr-481 is subject to Phosphothreonine. Ser-514 is modified (phosphoserine). Coiled coils occupy residues 514–589 and 640–673; these read SEKR…TVLK and SKQL…LRRS. Disordered stretches follow at residues 529–557 and 645–688; these read LREK…EKAW and FTLK…RSFH. A compositionally biased stretch (basic and acidic residues) spans 648–663; it reads KRSEQQKKQQEAEKLH. The span at 664–688 shows a compositional bias: basic residues; sequence RQERKRLRRSAGHLKSRHKRGRSFH.

Belongs to the WD repeat NOL10/ENP2 family.

Its subcellular location is the nucleus. The protein localises to the nucleolus. The polypeptide is Nucleolar protein 10 (NOL10) (Homo sapiens (Human)).